Here is a 478-residue protein sequence, read N- to C-terminus: MAPNAADKCPVMNNTGEKCPVMSSSTQSRGPRDIYTLEALSHFNREKIPERAVHAKGTGAYGEFEVTADISDICNIDMLLGVGKKTQCVTRFSTTGLERGSSDGVRDLKGMAVKFFTEQGDWDWVSLNFPFFFIRDPAKFPDMIHSQRRDPQTNLLNPNMTWDFVTKNPEALHMTLLQHSDFGTMFTWRTLSSYVGHAFKWVMPDGSFKYVHFFLASDRGPNFTDGSTAKVDPNDPDFATKDLFEAIERGDYPSWTANVQVVDPKDAPKLGFNILDLTKHWNLGTYPKGLDTIPSRPFGKLTLNRNVKDYFSEVEKLAFSPSNLVPGVEPSEDPILQARMFAYPDAQRYRLGIDHLKAPLRRKETACQHDLGPEFEKWLSQVTSEAWSHPHEDDYKFAREYYEVLPEFRSQEFQDRMVENLCKSIAPGPEELRKRVYDTFELVSSELARRLREGAEAIVAEKARPDSPSRAQPGQLRL.

His-54 is a catalytic residue. Heme is bound at residue Tyr-343. The interval 459–478 (VAEKARPDSPSRAQPGQLRL) is disordered.

Belongs to the catalase family. The cofactor is heme.

It functions in the pathway alkaloid biosynthesis; ergot alkaloid biosynthesis. Functionally, catalase; part of the gene cluster that mediates the biosynthesis of fungal ergot alkaloid. DmaW catalyzes the first step of ergot alkaloid biosynthesis by condensing dimethylallyl diphosphate (DMAP) and tryptophan to form 4-dimethylallyl-L-tryptophan. The second step is catalyzed by the methyltransferase easF that methylates 4-dimethylallyl-L-tryptophan in the presence of S-adenosyl-L-methionine, resulting in the formation of 4-dimethylallyl-L-abrine. The catalase easC and the FAD-dependent oxidoreductase easE then transform 4-dimethylallyl-L-abrine to chanoclavine-I which is further oxidized by easD in the presence of NAD(+), resulting in the formation of chanoclavine-I aldehyde. Chanoclavine-I aldehyde is the precursor of ergoamides and ergopeptines in Clavicipitaceae, and clavine-type alcaloids such as fumiclavine in Trichocomaceae. However, the metabolites downstream of chanoclavine-I aldehyde in Arthrodermataceae have not been identified yet. The protein is Catalase easC of Arthroderma benhamiae (strain ATCC MYA-4681 / CBS 112371) (Trichophyton mentagrophytes).